Reading from the N-terminus, the 231-residue chain is N-acetylmuramate alpha-1-phosphate uridylyltransferase (231 aa).

UTP-binding positions include 11-13 (GER) and Lys-23. A substrate-binding site is contributed by Asn-106. Residue Asp-108 participates in Mg(2+) binding. Substrate contacts are provided by Asp-146 and Asp-213. Asp-213 contacts Mg(2+).

It belongs to the nucleotidyltransferase MurU family. In terms of assembly, monomer. Requires Mg(2+) as cofactor.

It carries out the reaction N-acetyl-alpha-D-muramate 1-phosphate + UDP + H(+) = UDP-N-acetyl-alpha-D-muramate + phosphate. The protein operates within cell wall biogenesis; peptidoglycan recycling. Its function is as follows. Catalyzes the formation of UDP-N-acetylmuramate (UDP-MurNAc), a crucial precursor of the bacterial peptidoglycan cell wall, from UTP and MurNAc-alpha-1P. Is likely involved in peptidoglycan recycling as part of a cell wall recycling pathway that bypasses de novo biosynthesis of the peptidoglycan precursor UDP-MurNAc. Is able to complement the fosfomycin sensitivity phenotype of a P.putida mutant lacking murU. The chain is N-acetylmuramate alpha-1-phosphate uridylyltransferase from Neisseria meningitidis serogroup B (strain ATCC BAA-335 / MC58).